We begin with the raw amino-acid sequence, 125 residues long: Small ribosomal subunit protein uS12 (125 aa).

Asp-89 carries the post-translational modification 3-methylthioaspartic acid.

This sequence belongs to the universal ribosomal protein uS12 family. Part of the 30S ribosomal subunit. Contacts proteins S8 and S17. May interact with IF1 in the 30S initiation complex.

With S4 and S5 plays an important role in translational accuracy. Functionally, interacts with and stabilizes bases of the 16S rRNA that are involved in tRNA selection in the A site and with the mRNA backbone. Located at the interface of the 30S and 50S subunits, it traverses the body of the 30S subunit contacting proteins on the other side and probably holding the rRNA structure together. The combined cluster of proteins S8, S12 and S17 appears to hold together the shoulder and platform of the 30S subunit. The sequence is that of Small ribosomal subunit protein uS12 from Bordetella petrii (strain ATCC BAA-461 / DSM 12804 / CCUG 43448).